The chain runs to 180 residues: Endoribonuclease YbeY (180 aa).

Positions 118, 122, and 128 each coordinate Zn(2+).

The protein belongs to the endoribonuclease YbeY family. It depends on Zn(2+) as a cofactor.

It localises to the cytoplasm. In terms of biological role, single strand-specific metallo-endoribonuclease involved in late-stage 70S ribosome quality control and in maturation of the 3' terminus of the 16S rRNA. This Rhodococcus opacus (strain B4) protein is Endoribonuclease YbeY.